The following is a 323-amino-acid chain: Germacrene A synthase (323 aa).

Asp82, Asp86, Asn222, Ser226, and Glu230 together coordinate Mg(2+). The short motif at 82 to 86 is the DDXXD motif element; sequence DDQCD.

Belongs to the terpene synthase family. Mg(2+) serves as cofactor.

It carries out the reaction (2E,6E)-farnesyl diphosphate = 5-epi-alpha-selinene + diphosphate. Functionally, catalyzes the cyclization of farnesyl diphosphate (FPP) to the sesquiterpene germacrene A. The polypeptide is Germacrene A synthase (Nostoc punctiforme (strain ATCC 29133 / PCC 73102)).